The primary structure comprises 237 residues: tRNA (guanine-N(7)-)-methyltransferase (237 aa).

Residues E56, E81, D108, and D131 each contribute to the S-adenosyl-L-methionine site. The active site involves D131. Residues K135, D167, and 204–207 (TKFE) each bind substrate.

It belongs to the class I-like SAM-binding methyltransferase superfamily. TrmB family.

It catalyses the reaction guanosine(46) in tRNA + S-adenosyl-L-methionine = N(7)-methylguanosine(46) in tRNA + S-adenosyl-L-homocysteine. The protein operates within tRNA modification; N(7)-methylguanine-tRNA biosynthesis. Catalyzes the formation of N(7)-methylguanine at position 46 (m7G46) in tRNA. This Legionella pneumophila (strain Paris) protein is tRNA (guanine-N(7)-)-methyltransferase.